A 943-amino-acid chain; its full sequence is Aconitate hydratase A (943 aa).

Residues cysteine 479, cysteine 545, and cysteine 548 each contribute to the [4Fe-4S] cluster site.

The protein belongs to the aconitase/IPM isomerase family. Monomer. The cofactor is [4Fe-4S] cluster.

The catalysed reaction is citrate = D-threo-isocitrate. The enzyme catalyses (2S,3R)-3-hydroxybutane-1,2,3-tricarboxylate = 2-methyl-cis-aconitate + H2O. It functions in the pathway carbohydrate metabolism; tricarboxylic acid cycle; isocitrate from oxaloacetate: step 2/2. The protein operates within organic acid metabolism; propanoate degradation. Functionally, involved in the catabolism of short chain fatty acids (SCFA) via the tricarboxylic acid (TCA)(acetyl degradation route) and probably via the 2-methylcitrate cycle I (propionate degradation route). Catalyzes the reversible isomerization of citrate to isocitrate via cis-aconitate. The apo form of AcnA functions as a RNA-binding regulatory protein which binds to selected IRE-like sequences present within the UTRs (untranslated regions) of 3' trxC and 5' IdeR mRNA. Could catalyze the hydration of 2-methyl-cis-aconitate to yield (2R,3S)-2-methylisocitrate. The polypeptide is Aconitate hydratase A (acn) (Mycobacterium tuberculosis (strain ATCC 25618 / H37Rv)).